The following is a 339-amino-acid chain: Dihydroorotate dehydrogenase (quinone) (339 aa).

Residues 64 to 68 (AGADK) and Thr-88 each bind FMN. Lys-68 lines the substrate pocket. 113 to 117 (NRNGF) is a binding site for substrate. Positions 141 and 174 each coordinate FMN. Asn-174 contacts substrate. The active-site Nucleophile is Ser-177. Asn-179 is a substrate binding site. FMN contacts are provided by Lys-219 and Thr-247. 248-249 (NT) provides a ligand contact to substrate. FMN-binding positions include Gly-270, Gly-299, and 320–321 (YS).

It belongs to the dihydroorotate dehydrogenase family. Type 2 subfamily. In terms of assembly, monomer. Requires FMN as cofactor.

The protein localises to the cell membrane. The catalysed reaction is (S)-dihydroorotate + a quinone = orotate + a quinol. It functions in the pathway pyrimidine metabolism; UMP biosynthesis via de novo pathway; orotate from (S)-dihydroorotate (quinone route): step 1/1. Catalyzes the conversion of dihydroorotate to orotate with quinone as electron acceptor. This Pasteurella multocida (strain Pm70) protein is Dihydroorotate dehydrogenase (quinone) (pyrD).